Here is a 650-residue protein sequence, read N- to C-terminus: Threonine--tRNA ligase (650 aa).

Residues 1–61 enclose the TGS domain; that stretch reads MIKITFPDGA…DEDGTLEIVM (61 aa). Residues 242–540 are catalytic; the sequence is DHRKLGKELD…LIETYKGAFP (299 aa). Zn(2+)-binding residues include C336, H387, and H517.

Belongs to the class-II aminoacyl-tRNA synthetase family. Homodimer. Zn(2+) serves as cofactor.

It is found in the cytoplasm. It catalyses the reaction tRNA(Thr) + L-threonine + ATP = L-threonyl-tRNA(Thr) + AMP + diphosphate + H(+). In terms of biological role, catalyzes the attachment of threonine to tRNA(Thr) in a two-step reaction: L-threonine is first activated by ATP to form Thr-AMP and then transferred to the acceptor end of tRNA(Thr). Also edits incorrectly charged L-seryl-tRNA(Thr). The sequence is that of Threonine--tRNA ligase from Streptococcus suis (strain 98HAH33).